The chain runs to 122 residues: Large ribosomal subunit protein uL14 (122 aa).

It belongs to the universal ribosomal protein uL14 family. Part of the 50S ribosomal subunit. Forms a cluster with proteins L3 and L19. In the 70S ribosome, L14 and L19 interact and together make contacts with the 16S rRNA in bridges B5 and B8.

Functionally, binds to 23S rRNA. Forms part of two intersubunit bridges in the 70S ribosome. In Rhodopseudomonas palustris (strain HaA2), this protein is Large ribosomal subunit protein uL14.